We begin with the raw amino-acid sequence, 260 residues long: Carbonic anhydrase 2 (260 aa).

S2 is subject to N-acetylserine. Residue S2 is modified to Phosphoserine. In terms of domain architecture, Alpha-carbonic anhydrase spans 3–259 (HHWGYGKHNG…LKGRQVKASF (257 aa)). H64 acts as the Proton donor/acceptor in catalysis. The Zn(2+) site is built by H94, H96, and H119. Residues S165 and S172 each carry the phosphoserine modification. Position 198–199 (198–199 (TT)) interacts with substrate.

This sequence belongs to the alpha-carbonic anhydrase family. Interacts with SLC4A4 and SLC26A6. Interaction with SLC4A7 regulates SLC4A7 transporter activity. Zn(2+) serves as cofactor.

The protein localises to the cytoplasm. Its subcellular location is the cell membrane. It carries out the reaction hydrogencarbonate + H(+) = CO2 + H2O. The enzyme catalyses urea = cyanamide + H2O. Its activity is regulated as follows. Inhibited by acetazolamide. In terms of biological role, catalyzes the reversible hydration of carbon dioxide. Can also hydrate cyanamide to urea. Involved in the regulation of fluid secretion into the anterior chamber of the eye. Essential for bone resorption and osteoclast differentiation. Contributes to intracellular pH regulation in the duodenal upper villous epithelium during proton-coupled peptide absorption. Stimulates the chloride-bicarbonate exchange activity of SLC26A6. The chain is Carbonic anhydrase 2 (CA2) from Oryctolagus cuniculus (Rabbit).